The following is a 312-amino-acid chain: tRNA-dihydrouridine(16) synthase (312 aa).

Residues 7-9 (PMQ) and glutamine 68 each bind FMN. The Proton donor role is filled by cysteine 98. Residues lysine 139, 200 to 202 (NGE), and 224 to 225 (GR) contribute to the FMN site.

This sequence belongs to the Dus family. DusC subfamily. It depends on FMN as a cofactor.

It carries out the reaction 5,6-dihydrouridine(16) in tRNA + NADP(+) = uridine(16) in tRNA + NADPH + H(+). The catalysed reaction is 5,6-dihydrouridine(16) in tRNA + NAD(+) = uridine(16) in tRNA + NADH + H(+). Its function is as follows. Catalyzes the synthesis of 5,6-dihydrouridine (D), a modified base found in the D-loop of most tRNAs, via the reduction of the C5-C6 double bond in target uridines. Specifically modifies U16 in tRNAs. The chain is tRNA-dihydrouridine(16) synthase from Pasteurella multocida (strain Pm70).